The chain runs to 371 residues: Aminomethyltransferase (371 aa).

The protein belongs to the GcvT family. The glycine cleavage system is composed of four proteins: P, T, L and H.

The enzyme catalyses N(6)-[(R)-S(8)-aminomethyldihydrolipoyl]-L-lysyl-[protein] + (6S)-5,6,7,8-tetrahydrofolate = N(6)-[(R)-dihydrolipoyl]-L-lysyl-[protein] + (6R)-5,10-methylene-5,6,7,8-tetrahydrofolate + NH4(+). Its function is as follows. The glycine cleavage system catalyzes the degradation of glycine. This is Aminomethyltransferase from Cutibacterium acnes (strain DSM 16379 / KPA171202) (Propionibacterium acnes).